The chain runs to 977 residues: MRGYHGDRGSHPRPARFADQQHMDVGPAARAPYLLGSREAFSTEPRFCAPRAGLGHLSPEGPLSLSEGPSSVGPEGGPGGVGAGGGSSTFPRMYPGQGPFDTCEDCVGHPQGKGATRLPPTLLDQFEKQLPVQQDGFHTLPYQRGPAGPGPGPGSGAAPEARSESPSRIRHLVHSVQKLFAKSHSLEAPGKRDYNGPKADGRGSSGGDSYSGPGSGGTPTSHHHHHHHHHHHHQSRHGKRSKSKDRKGDGRHQTKATGWWSSDDNLDSDSGFLGGRPPGEPGGPFCLDAPDGSYRDLSFKGRSGGSEGRCLACTGMSMSLDGQSVKRSAWHTMMVSQGRDGYPGAGPGKGLLGPETKAKARTYHYLQVPQDDWGGYPTGGKDGEIPCRRMRSGSYIKAMGDEESGDSDGSPKTSPKALARRFASRRSSSVDTARINCCVPPRIHPRSSIPGYSRSLTTGQLSEEFNQQLEAVCGSVFGELESQAVDALDLPGCFRMRSHSYLRAIQAGCSQDDDCLPLLAAPASVSGRPGSSFNFRKAPPPIPPGSQAPPRISITAQSSTDSAHESFTAAEGPARRCSSADGLDGPTMGARTLELAPVPPRASPKPPTLIIKTIPGREELRSLARQRKWRPSIGVQVETISDSDTENRSRREFHSIGVQVEEDKRRARFKRSNSVTAGVQADLELEGLAGLATVATEDKALQFGRSFQRHASEPQPGPRAPTYSVFRTVHTQGQWAYREGYPLPYEPPATDGSPGPTPVPAPGPGSGRRDSWMERGSRSLPDSGRTSPCPRDGEWFIKMLRAEVEKLEHWCQQMEREAEDYELPEEILEKIRSAVGSTQLLLSQKVQQFFRLCQQSLDPTAFPVPTFQDLAGFWDLLQLSIEDVTLKFLELQQLKANSWKLLEPKEEKKVPPPIPKKPSRGRGVPVKERSLDSVDRQRQEARKRLLAAKRAASFRHSSATESADSIEIYIPEAQTRL.

Residues 1 to 10 show a composition bias toward basic and acidic residues; sequence MRGYHGDRGS. Disordered regions lie at residues 1–24, 52–96, 137–167, 181–289, 398–417, and 529–582; these read MRGY…QHMD, AGLG…MYPG, FHTL…ESPS, AKSH…CLDA, AMGD…SPKA, and PGSS…SADG. Low complexity predominate over residues 53–73; the sequence is GLGHLSPEGPLSLSEGPSSVG. Ser-58 is modified (phosphoserine). A compositionally biased stretch (gly residues) spans 74 to 87; sequence PEGGPGGVGAGGGS. Residues 189-201 show a composition bias toward basic and acidic residues; the sequence is PGKRDYNGPKADG. Residues 221–245 are compositionally biased toward basic residues; that stretch reads SHHHHHHHHHHHHQSRHGKRSKSKD. The span at 258–271 shows a compositional bias: low complexity; that stretch reads GWWSSDDNLDSDSG. 4 positions are modified to phosphoserine: Ser-404, Ser-407, Ser-410, and Ser-414. The span at 538 to 547 shows a compositional bias: pro residues; the sequence is APPPIPPGSQ. Phosphoserine is present on residues Ser-641 and Ser-643. 2 disordered regions span residues 739–788 and 906–939; these read EGYP…RTSP and EEKK…RQRQ. Composition is skewed to basic and acidic residues over residues 767–777 and 925–939; these read GRRDSWMERGS and PVKE…RQRQ. Ser-930, Ser-933, and Ser-965 each carry phosphoserine.

It belongs to the SAPAP family. In terms of assembly, interacts with DLG4/PSD-95. In terms of tissue distribution, highly expressed in central and peripherical nervous system (at protein level).

It localises to the cell membrane. The protein localises to the postsynaptic density. Its subcellular location is the synapse. Its function is as follows. May play a role in the molecular organization of synapses and neuronal cell signaling. Could be an adapter protein linking ion channel to the subsynaptic cytoskeleton. May induce enrichment of PSD-95/SAP90 at the plasma membrane. This chain is Disks large-associated protein 3 (Dlgap3), found in Mus musculus (Mouse).